The sequence spans 150 residues: Catabolic 3-dehydroquinase 1 (150 aa).

The active-site Proton acceptor is the Tyr24. Substrate is bound by residues Asn75, His81, and Asp88. His101 serves as the catalytic Proton donor. Residues 102 to 103 (VS) and Arg112 contribute to the substrate site.

The protein belongs to the type-II 3-dehydroquinase family. Homododecamer. Adopts a ring-like structure, composed of an arrangement of two hexameric rings stacked on top of one another.

It carries out the reaction 3-dehydroquinate = 3-dehydroshikimate + H2O. Its pathway is aromatic compound metabolism; 3,4-dihydroxybenzoate biosynthesis; 3,4-dihydroxybenzoate from 3-dehydroquinate: step 1/2. Its function is as follows. Is involved in the catabolism of quinate. Allows the utilization of quinate as carbon source via the beta-ketoadipate pathway. This is Catabolic 3-dehydroquinase 1 from Neosartorya fischeri (strain ATCC 1020 / DSM 3700 / CBS 544.65 / FGSC A1164 / JCM 1740 / NRRL 181 / WB 181) (Aspergillus fischerianus).